The chain runs to 274 residues: Penicillin-insensitive murein endopeptidase (274 aa).

The signal sequence occupies residues 1–19 (MKKTAIALLAWFVSSASLA). 3 cysteine pairs are disulfide-bonded: cysteine 44-cysteine 265, cysteine 187-cysteine 235, and cysteine 216-cysteine 223. Histidine 110, histidine 113, aspartate 120, aspartate 147, histidine 150, and histidine 211 together coordinate Zn(2+). A disordered region spans residues 225-274 (DQPLPPPGDGCGAELQSWFEPPKLGTTKPEKKTPPPLPPSCQALLDEHVL).

This sequence belongs to the peptidase M74 family. In terms of assembly, dimer. Zn(2+) is required as a cofactor.

The protein localises to the periplasm. In terms of biological role, murein endopeptidase that cleaves the D-alanyl-meso-2,6-diamino-pimelyl amide bond that connects peptidoglycan strands. Likely plays a role in the removal of murein from the sacculus. The protein is Penicillin-insensitive murein endopeptidase of Salmonella paratyphi B (strain ATCC BAA-1250 / SPB7).